Consider the following 244-residue polypeptide: uncharacterized protein (244 aa).

Transmembrane regions (helical) follow at residues 21–41 (FPYS…YGIY), 44–64 (ALGF…AGSV), 66–86 (FIAA…LITL), 139–159 (WYMF…AAMG), 165–185 (VLPF…LVIF), and 199–219 (LLGL…YFLI).

It belongs to the AzlC family.

It localises to the cell membrane. This is an uncharacterized protein from Haemophilus influenzae (strain ATCC 51907 / DSM 11121 / KW20 / Rd).